A 158-amino-acid chain; its full sequence is Chromobox protein homolog 7 (158 aa).

A Chromo domain is found at 11-69; it reads FAVESIRKKRVRKGKVEYLVKWKGWPPKYSTWEPEEHILDPRLVMAYEEKEEKDRASGY. The interval 60-124 is disordered; it reads KEEKDRASGY…PPPWTPMLPS (65 aa). Residues 68–78 are compositionally biased toward basic residues; it reads GYRKRGPKPKR.

As to quaternary structure, component of a PRC1-like complex. Distinct PRC1-like core complexes are composed of a RING1 subunit (RING1B or RING1A), one of the six PCGF proteins (PCGF1-6), one PHC protein (PHC1-3) and one of the CBX proteins (CBX2, CBX4, CBX6, CBX7 or CBX8). The composition of the PRC1 complex may differ between the PRC1 complex in pluripotent embryonic stem cells containing RNF2, CBX7 and PCGF2, and the PRC1 complex in differentiating cells containing RNF2, CBX2, CBX4 and BMI1. Interacts with RING1. Interacts with RNF2/RING1B. Interacts with PCGF1, PCGF2, PCGF3, PCGF5 and PCGF6. Interacts (via chromodomain) with histone H3K9Me3 and H3K27me3. Interacts with H3K9Me2 and H4K20Me1. Interacts (via chromodomain) with single-stranded and double-stranded RNA; RNA binding seems to be required for the localization to chromatin.

The protein localises to the nucleus. It is found in the chromosome. Its function is as follows. Component of a Polycomb group (PcG) multiprotein PRC1-like complex, a complex class required to maintain the transcriptionally repressive state of many genes, including Hox genes, throughout development. PcG PRC1 complex acts via chromatin remodeling and modification of histones; it mediates monoubiquitination of histone H2A 'Lys-119', rendering chromatin heritably changed in its expressibility. Promotes histone H3 trimethylation at 'Lys-9' (H3K9me3). Binds to histone H3 trimethylated 'Lys-9' (H3K9me3) or at 'Lys-27' (H3K27me3). May possibly also bind trimethylated lysine residues in other proteins (in vitro). Binds non-coding, single-stranded and double-stranded RNA. Plays a role in the timely repression of differentiation-specific genes in pluripotent embryonic stem cells to maintain the undifferentiated state. Regulator of cellular lifespan by maintaining the repression of CDKN2A, but not by inducing telomerase activity. The chain is Chromobox protein homolog 7 (Cbx7) from Rattus norvegicus (Rat).